A 112-amino-acid polypeptide reads, in one-letter code: UPF0235 protein Atu2660 (112 aa).

Belongs to the UPF0235 family.

The chain is UPF0235 protein Atu2660 from Agrobacterium fabrum (strain C58 / ATCC 33970) (Agrobacterium tumefaciens (strain C58)).